A 136-amino-acid chain; its full sequence is MKWQQRVRVATGLSCWQIMLHLLVVALLVVGWMSKTLVHVGVGLCALYCVTVVMMLVFQRHPEQRWREVADVLEELTTTWYFGAALIVLWLLSRVLENNFLLAIAGLAILAGPAVVSLLAKDKKLHHLTSKHRVRR.

At 1–12 (MKWQQRVRVATG) the chain is on the cytoplasmic side. The chain crosses the membrane as a helical span at residues 13-33 (LSCWQIMLHLLVVALLVVGWM). The Periplasmic segment spans residues 34 to 37 (SKTL). A helical membrane pass occupies residues 38–58 (VHVGVGLCALYCVTVVMMLVF). Topologically, residues 59-71 (QRHPEQRWREVAD) are cytoplasmic. A helical transmembrane segment spans residues 72–92 (VLEELTTTWYFGAALIVLWLL). Topologically, residues 93–99 (SRVLENN) are periplasmic. The helical transmembrane segment at 100 to 120 (FLLAIAGLAILAGPAVVSLLA) threads the bilayer. Over 121 to 136 (KDKKLHHLTSKHRVRR) the chain is Cytoplasmic.

The protein localises to the cell inner membrane. The protein is Inner membrane protein YbhQ (ybhQ) of Escherichia coli O157:H7.